We begin with the raw amino-acid sequence, 1129 residues long: Protein TPR1 (1129 aa).

One can recognise a LisH domain in the interval 4 to 36; the sequence is LSRELVFLILQFLDEEKFKETVHKLEQESGFFF. Residues 34–92 form the CTLH domain; the sequence is FFFNMKYFEEKVHAGEWDEVEKYLSGFTKVDDNRYSMKIFFEIRKQKYLEALDRHDRAK. 11 WD repeats span residues 337 to 377, 398 to 437, 443 to 485, 487 to 527, 579 to 618, 623 to 662, 762 to 801, 829 to 867, 870 to 910, 913 to 952, and 1005 to 1044; these read SQGS…RLFS, ESSI…ETRQ, AHSG…FSFE, HEAP…SRVD, KKSA…MLSS, GGLP…RTLR, DQAS…QNPS, NPED…VMTT, PPPP…VKTR, GHQR…KKKS, and ALSA…LRCR. Residues 1092–1129 are disordered; that stretch reads LESEGKWGTTPPTENGVPNGRTSTSSATSNPAADQIQR. Over residues 1113-1129 the composition is skewed to low complexity; the sequence is TSTSSATSNPAADQIQR.

Tetramer. Interacts with D53. Interacts with WOX1. Interacts with MOF1. In terms of tissue distribution, expressed in panicles, stems, leaves, spikelets and seed endosperm.

Its function is as follows. Probable downstream regulator of strigolactones signaling. This is Protein TPR1 from Oryza sativa subsp. japonica (Rice).